The sequence spans 117 residues: Histone H1-like protein HC1 (117 aa).

Positions 57-117 (EKSGLMTRKP…KSSKSRYLRK (61 aa)) are disordered. Basic residues predominate over residues 66–81 (PATKAKKAAATKKAAP). Positions 82-94 (KPKIQAKAAPKAK) are enriched in low complexity. Residues 95-117 (ATTKKTPAKAKAKKSSKSRYLRK) show a composition bias toward basic residues.

The protein belongs to the histone H1/H5 family. HCT subfamily.

In terms of biological role, might have a role analogous to that of eukaryotic histone proteins. This is Histone H1-like protein HC1 (hctA) from Chlamydia psittaci (Chlamydophila psittaci).